The sequence spans 253 residues: uncharacterized protein (253 aa).

Positions 17, 36, 62, 89, 158, 162, 191, and 193 each coordinate NADP(+). The active-site Proton donor is the Y158. The active-site Lowers pKa of active site Tyr is the K162.

Belongs to the short-chain dehydrogenases/reductases (SDR) family.

Its subcellular location is the cytoplasm. It is found in the nucleus. This is an uncharacterized protein from Schizosaccharomyces pombe (strain 972 / ATCC 24843) (Fission yeast).